Consider the following 435-residue polypeptide: Gamma-glutamyl phosphate reductase (435 aa).

Belongs to the gamma-glutamyl phosphate reductase family.

The protein resides in the cytoplasm. It carries out the reaction L-glutamate 5-semialdehyde + phosphate + NADP(+) = L-glutamyl 5-phosphate + NADPH + H(+). Its pathway is amino-acid biosynthesis; L-proline biosynthesis; L-glutamate 5-semialdehyde from L-glutamate: step 2/2. Catalyzes the NADPH-dependent reduction of L-glutamate 5-phosphate into L-glutamate 5-semialdehyde and phosphate. The product spontaneously undergoes cyclization to form 1-pyrroline-5-carboxylate. This chain is Gamma-glutamyl phosphate reductase, found in Synechococcus sp. (strain WH7803).